Reading from the N-terminus, the 174-residue chain is MASASATATLLKPNLPPHKPTIIASSVSPPLPPPRRNHLLRRDFLSLAATSTLLTQSIQFLAPAPVSAAEDEEYIKDTSAVISKVRSTLSMQKTDPNVADAVAELREASNSWVAKYRKEKALLGKASFRDIYSALNAVSGHYVSFGPTAPIPAKRKARILEEMETAEKALTRGR.

The interval 1–35 is disordered; it reads MASASATATLLKPNLPPHKPTIIASSVSPPLPPPR. T94 is modified (phosphothreonine). Y132 carries the post-translational modification Phosphotyrosine.

The protein belongs to the Psb27 family.

It localises to the plastid. It is found in the chloroplast thylakoid membrane. Probably involved in repair of photodamaged photosystem II (PSII). This chain is Photosystem II repair protein PSB27-H1, chloroplastic (PSB27-1), found in Arabidopsis thaliana (Mouse-ear cress).